The chain runs to 147 residues: UPF0179 protein MTH_609 (147 aa).

The protein belongs to the UPF0179 family.

The chain is UPF0179 protein MTH_609 from Methanothermobacter thermautotrophicus (strain ATCC 29096 / DSM 1053 / JCM 10044 / NBRC 100330 / Delta H) (Methanobacterium thermoautotrophicum).